Here is a 185-residue protein sequence, read N- to C-terminus: Ribosome-recycling factor (185 aa).

This sequence belongs to the RRF family.

It localises to the cytoplasm. In terms of biological role, responsible for the release of ribosomes from messenger RNA at the termination of protein biosynthesis. May increase the efficiency of translation by recycling ribosomes from one round of translation to another. This Shewanella woodyi (strain ATCC 51908 / MS32) protein is Ribosome-recycling factor.